Consider the following 371-residue polypeptide: Transcription factor MYB12 (371 aa).

HTH myb-type domains are found at residues 9 to 61 (KVGI…INYL) and 62 to 116 (RSDL…SRKL). 2 DNA-binding regions (H-T-H motif) span residues 37 to 61 (WRSL…INYL) and 89 to 112 (WSLI…NSHL). A disordered region spans residues 136 to 183 (NASSAPPPPQAKRRLGRTSRSAMKPKIHRTKTRKTKKTSAPPEPNADV). The span at 146–172 (AKRRLGRTSRSAMKPKIHRTKTRKTKK) shows a compositional bias: basic residues.

As to expression, expressed in stems and flower buds. Expressed in seedlings, roots, cotyledons and apical meristems.

It is found in the nucleus. In terms of biological role, flavonol-specific transcription activator involved in the regulation of several genes of flavonoid biosynthesis. Activates the expression of CHS, CHI, F3H and FLS1. Controls flavonol biosynthesis mainly in the root. Confers tolerance to UV-B. The polypeptide is Transcription factor MYB12 (Arabidopsis thaliana (Mouse-ear cress)).